The primary structure comprises 154 residues: Ribonuclease 8 (154 aa).

Residues 1 to 27 form the signal peptide; that stretch reads MAPARAGCCALLLLLLGLWVAEIPVSA. The active-site Proton acceptor is His42. 3 disulfides stabilise this stretch: Cys64/Cys118, Cys82/Cys133, and Cys89/Cys96. Substrate-binding positions include 65-69 and Lys90; that span reads KDLNT. His149 (proton donor) is an active-site residue.

The protein belongs to the pancreatic ribonuclease family.

It is found in the secreted. Functionally, has a low ribonuclease activity. The chain is Ribonuclease 8 (RNASE8) from Pongo pygmaeus (Bornean orangutan).